We begin with the raw amino-acid sequence, 551 residues long: MSNYAPFIKPYVEYNEHGWGPCEVPELDVPYQPFCKSDRLGKICDWTAMVPEKKFPSKYASTFGNNSQYAYFYEDDDSTFHLVDTTGSKATKPYQRGRYRTNMRNNVRTRGRTGRGTPNIASLGGSTAGGATASSTKYGKGRHTRNTQNVGRRFGRNAPTRIRESSVMVQSNWVSIEEIDFPRLLKLALPNIKEGKDIATCGSLEFYDKLYDRVNLRNEKPLQKMARVVHTVTTTDDPVIRRLSKTMGNVFATDEILSTIMCCTRSNYSWDVVVEKLGTKVFLDKRYNDQFDLLTVNETSVEPPMEEEGSINSAHSLAMEATLINHNFSQQVLRIGDQEQRFMFEEPNPFEEPGVDLASIGYRYRQWDLGNDVVLIARCKHNAVIQGPNGDMQFLSIKALNEWDSKVTNSVEWRQKLDTQRGAVLASELRNNACKLARWTVEAVLAGSDQLKLGYVSRMNPRDHLRHVILGTQQFKPQEFATQINLNMDNSWGVLRCLIDLVMKQPDGKYLIMKDPNKPMIRLYDVPENAFDSDRDEEEESSEPLSNSNDN.

The interval 108–152 (RTRGRTGRGTPNIASLGGSTAGGATASSTKYGKGRHTRNTQNVGR) is disordered. The span at 115–136 (RGTPNIASLGGSTAGGATASST) shows a compositional bias: low complexity. Residues 290–304 (QFDLLTVNETSVEPP) form an RNA gate region. The tract at residues 527 to 551 (PENAFDSDRDEEEESSEPLSNSNDN) is disordered.

The protein belongs to the eIF-3 subunit D family. As to quaternary structure, component of the eukaryotic translation initiation factor 3 (eIF-3) complex. The eIF-3 complex interacts with pix.

It localises to the cytoplasm. Functionally, mRNA cap-binding component of the eukaryotic translation initiation factor 3 (eIF-3) complex, which is involved in protein synthesis of a specialized repertoire of mRNAs and, together with other initiation factors, stimulates binding of mRNA and methionyl-tRNAi to the 40S ribosome. The eIF-3 complex specifically targets and initiates translation of a subset of mRNAs involved in cell proliferation. In the eIF-3 complex, eif3d specifically recognizes and binds the 7-methylguanosine cap of a subset of mRNAs. In Drosophila simulans (Fruit fly), this protein is Eukaryotic translation initiation factor 3 subunit D-2.